A 295-amino-acid chain; its full sequence is Caffeine dehydrogenase subunit beta (295 aa).

An FAD-binding PCMH-type domain is found at 1 to 178 (MKPTAFDYIR…CEIRIPVPSQ (178 aa)). FAD-binding positions include 32–36 (AGGQS) and 111–115 (TLGGN).

As to quaternary structure, heterotrimer composed of an alpha (CdhA), a beta (CdhB) and a gamma (CdhC) subunit.

It carries out the reaction caffeine + a ubiquinone + H2O = 1,3,7-trimethylurate + a ubiquinol. The catalysed reaction is ubiquinone-0 + caffeine + H2O = ubiquinol-0 + 1,3,7-trimethylurate. The enzyme catalyses theobromine + a ubiquinone + H2O = 3,7-dimethylurate + a ubiquinol. Component of the caffeine dehydrogenase complex that catalyzes the hydrolytical oxidation of 1,3,7-trimethylxanthine (caffeine) by incorporation of an oxygen atom originating from a water molecule into position C-8 to produce 1,3,7-trimethyluric acid (TMU). Coenzyme Q0 (ubiquinone-0) is the preferred electron acceptor and, to a lesser extent, coenzyme Q2 (ubiquinone-2) can also be used, but oxygen and NAD(P)(+) cannot. Is involved in a caffeine degradation pathway that allows Pseudomonas sp. strain CBB1 to grow on caffeine as the sole carbon and nitrogen source. Is also active with theobromine as substrate, but shows a very poor activity with theophylline and is not active with xanthine, 3-methylxanthine, 7-methylxanthine, TMU, and 3,7-dimethylurate. This Pseudomonas sp. (strain CBB1) protein is Caffeine dehydrogenase subunit beta.